The following is a 279-amino-acid chain: MIVIHSVAQMQQYARERRGDIALVPTMGYLHEGHASLMVEARKRAKYVVASIFVNPTQFGINEDLDSYPRDLEHDKEIAAKAGVDVIFAPTAADMYPDRYQSYLNVEEITVHLCGASRPGHFRGVTTVVAKLFNIVAPKVAFFGKKDFQQLAVIRRMVRDFNFDIEIVGMPIVREKDGLAMSSRNTKLSPAEREKALCLSRSIAAAKAAFRGGERSVAALQKVAAAVIEAENSPLIDYLEFRDQDSLLPLDKADERTLLALAVRVGSVRLIDNSILGED.

ATP is bound at residue 27–34 (MGYLHEGH). Catalysis depends on H34, which acts as the Proton donor. Q58 contributes to the (R)-pantoate binding site. Q58 serves as a coordination point for beta-alanine. 144–147 (GKKD) lines the ATP pocket. Q150 contributes to the (R)-pantoate binding site. ATP-binding positions include V173 and 181 to 184 (MSSR).

This sequence belongs to the pantothenate synthetase family. Homodimer.

The protein resides in the cytoplasm. The enzyme catalyses (R)-pantoate + beta-alanine + ATP = (R)-pantothenate + AMP + diphosphate + H(+). The protein operates within cofactor biosynthesis; (R)-pantothenate biosynthesis; (R)-pantothenate from (R)-pantoate and beta-alanine: step 1/1. Catalyzes the condensation of pantoate with beta-alanine in an ATP-dependent reaction via a pantoyl-adenylate intermediate. This Geobacter sp. (strain M21) protein is Pantothenate synthetase.